The sequence spans 120 residues: NAD(P)H-quinone oxidoreductase subunit 3 (120 aa).

Transmembrane regions (helical) follow at residues 6–26, 64–84, and 89–109; these read GYDA…LALV, MFAL…PWAV, and LGLL…VALA.

The protein belongs to the complex I subunit 3 family. In terms of assembly, NDH-1 can be composed of about 15 different subunits; different subcomplexes with different compositions have been identified which probably have different functions.

It localises to the cellular thylakoid membrane. It catalyses the reaction a plastoquinone + NADH + (n+1) H(+)(in) = a plastoquinol + NAD(+) + n H(+)(out). The enzyme catalyses a plastoquinone + NADPH + (n+1) H(+)(in) = a plastoquinol + NADP(+) + n H(+)(out). In terms of biological role, NDH-1 shuttles electrons from an unknown electron donor, via FMN and iron-sulfur (Fe-S) centers, to quinones in the respiratory and/or the photosynthetic chain. The immediate electron acceptor for the enzyme in this species is believed to be plastoquinone. Couples the redox reaction to proton translocation, and thus conserves the redox energy in a proton gradient. Cyanobacterial NDH-1 also plays a role in inorganic carbon-concentration. The polypeptide is NAD(P)H-quinone oxidoreductase subunit 3 (Synechococcus sp. (strain WH7803)).